The chain runs to 443 residues: tRNA-2-methylthio-N(6)-dimethylallyladenosine synthase (443 aa).

The 115-residue stretch at 12 to 126 (KTFRVKSFGC…LPEMVADAAA (115 aa)) folds into the MTTase N-terminal domain. Residues Cys21, Cys57, Cys89, Cys162, Cys166, and Cys169 each coordinate [4Fe-4S] cluster. Positions 148-380 (RKSAPTAFLT…QAALNRDQLA (233 aa)) constitute a Radical SAM core domain. Residues 383 to 443 (KASVGKTCEV…GPNSISGRLA (61 aa)) form the TRAM domain.

This sequence belongs to the methylthiotransferase family. MiaB subfamily. Monomer. The cofactor is [4Fe-4S] cluster.

It is found in the cytoplasm. It carries out the reaction N(6)-dimethylallyladenosine(37) in tRNA + (sulfur carrier)-SH + AH2 + 2 S-adenosyl-L-methionine = 2-methylsulfanyl-N(6)-dimethylallyladenosine(37) in tRNA + (sulfur carrier)-H + 5'-deoxyadenosine + L-methionine + A + S-adenosyl-L-homocysteine + 2 H(+). Catalyzes the methylthiolation of N6-(dimethylallyl)adenosine (i(6)A), leading to the formation of 2-methylthio-N6-(dimethylallyl)adenosine (ms(2)i(6)A) at position 37 in tRNAs that read codons beginning with uridine. The sequence is that of tRNA-2-methylthio-N(6)-dimethylallyladenosine synthase from Novosphingobium aromaticivorans (strain ATCC 700278 / DSM 12444 / CCUG 56034 / CIP 105152 / NBRC 16084 / F199).